The primary structure comprises 542 residues: CTP synthase (542 aa).

Positions 1–265 (MTKFVFVTGG…DEIVCHKLNL (265 aa)) are amidoligase domain. Residue Ser13 coordinates CTP. Ser13 is a binding site for UTP. Residues 14 to 19 (SLGKGI) and Asp71 each bind ATP. Residues Asp71 and Glu139 each coordinate Mg(2+). Residues 146-148 (DIE), 186-191 (KTKPTQ), and Lys222 contribute to the CTP site. Residues 186 to 191 (KTKPTQ) and Lys222 contribute to the UTP site. Residues 290–542 (NVAFVGKYVD…IAAALANRKA (253 aa)) form the Glutamine amidotransferase type-1 domain. Gly351 serves as a coordination point for L-glutamine. Residue Cys378 is the Nucleophile; for glutamine hydrolysis of the active site. Residues 379–382 (LGMQ), Glu402, and Arg468 each bind L-glutamine. Active-site residues include His515 and Glu517.

The protein belongs to the CTP synthase family. In terms of assembly, homotetramer.

The enzyme catalyses UTP + L-glutamine + ATP + H2O = CTP + L-glutamate + ADP + phosphate + 2 H(+). It carries out the reaction L-glutamine + H2O = L-glutamate + NH4(+). It catalyses the reaction UTP + NH4(+) + ATP = CTP + ADP + phosphate + 2 H(+). It participates in pyrimidine metabolism; CTP biosynthesis via de novo pathway; CTP from UDP: step 2/2. With respect to regulation, allosterically activated by GTP, when glutamine is the substrate; GTP has no effect on the reaction when ammonia is the substrate. The allosteric effector GTP functions by stabilizing the protein conformation that binds the tetrahedral intermediate(s) formed during glutamine hydrolysis. Inhibited by the product CTP, via allosteric rather than competitive inhibition. Functionally, catalyzes the ATP-dependent amination of UTP to CTP with either L-glutamine or ammonia as the source of nitrogen. Regulates intracellular CTP levels through interactions with the four ribonucleotide triphosphates. The polypeptide is CTP synthase (Methylobacillus flagellatus (strain ATCC 51484 / DSM 6875 / VKM B-1610 / KT)).